Reading from the N-terminus, the 59-residue chain is Large ribosomal subunit protein bL32 (59 aa).

Residues 1-59 form a disordered region; that stretch reads MAVQQNKKSPSKRGMHRSHDHLSVAPLAVEPTTGETHLRHHVSPNGYYRGRKVIKTKND. 2 stretches are compositionally biased toward basic residues: residues 9 to 19 and 49 to 59; these read SPSKRGMHRSH and RGRKVIKTKND.

The protein belongs to the bacterial ribosomal protein bL32 family.

This chain is Large ribosomal subunit protein bL32, found in Cupriavidus metallidurans (strain ATCC 43123 / DSM 2839 / NBRC 102507 / CH34) (Ralstonia metallidurans).